Reading from the N-terminus, the 180-residue chain is Stathmin-3 (180 aa).

The SLD domain maps to 38–180 (GDMEVKQLDK…NKEQREEISG (143 aa)). Residues 60-74 (SPSDLSPESPILSSP) are compositionally biased toward low complexity. A disordered region spans residues 60–82 (SPSDLSPESPILSSPPKKKDLSL). Positions 75-179 (PKKKDLSLEE…RNKEQREEIS (105 aa)) form a coiled coil.

The protein belongs to the stathmin family.

The chain is Stathmin-3 (STMN3) from Gallus gallus (Chicken).